A 169-amino-acid chain; its full sequence is Putative phosphoesterase SAR0985 (169 aa).

Histidine 34 functions as the Proton donor in the catalytic mechanism. 2 consecutive short sequence motifs (HXTX) follow at residues 34-37 (HVTI) and 115-118 (HFTI). Histidine 115 serves as the catalytic Proton acceptor.

Belongs to the 2H phosphoesterase superfamily. YjcG family.

This Staphylococcus aureus (strain MRSA252) protein is Putative phosphoesterase SAR0985.